The sequence spans 88 residues: Homeobox protein knotted-1-like 3 (88 aa).

Residues 4–24 enclose the ELK domain; it reads ELKKQLLRKYSGCLGNLRKEL. Residues 25–88 constitute a DNA-binding region (homeobox; TALE-type); the sequence is CKKRKKDKLP…NQRKRHWKPS (64 aa).

It belongs to the TALE/KNOX homeobox family. As to expression, strongly expressed in ear inflorescence primordia and shoot meristem. Weakly expressed in embryos. Absent from leaves.

It is found in the nucleus. Probably binds to the DNA sequence 5'-TGAC-3'. The protein is Homeobox protein knotted-1-like 3 (KNOX3) of Zea mays (Maize).